Consider the following 1448-residue polypeptide: Protein clueless (1448 aa).

Disordered stretches follow at residues 1–96, 110–129, and 265–286; these read MALE…HAEK, NANV…ADGD, and RTRP…VSDP. 2 stretches are compositionally biased toward low complexity: residues 9–26 and 41–66; these read NSNA…TKAS and NLNP…ADGP. Positions 68–77 are enriched in basic residues; it reads AKKKGKKNRN. Residues 78 to 88 show a composition bias toward polar residues; that stretch reads KSPTEPTTEAV. Position 270 is a phosphoserine (Ser270). In terms of domain architecture, Clu spans 424-666; the sequence is RAEDAFSSKL…RTFPPDVNFL (243 aa). Disordered regions lie at residues 726–773, 958–1010, and 1414–1448; these read SEKS…SGEA, AVSS…SASD, and GEAE…ATSS. The span at 748-769 shows a compositional bias: basic and acidic residues; it reads GAEKPDDKEKKNEEEEKKERST. A compositionally biased stretch (basic residues) spans 966–981; that stretch reads KKRGNGGKHNKHKSSK. The segment covering 986 to 1007 has biased composition (low complexity); sequence QQQQQTTGNQNGSSSGSSNSSS. Residues 1419–1429 are compositionally biased toward basic and acidic residues; that stretch reads AVSKDIKEQPE.

It belongs to the CLU family.

The protein localises to the cytoplasm. In terms of biological role, mRNA-binding protein involved in proper cytoplasmic distribution of mitochondria. This Drosophila melanogaster (Fruit fly) protein is Protein clueless.